The chain runs to 605 residues: Aspartate--tRNA(Asp/Asn) ligase (605 aa).

Glutamate 183 contributes to the L-aspartate binding site. The interval 207–210 (QLFK) is aspartate. Arginine 229 provides a ligand contact to L-aspartate. ATP is bound by residues 229-231 (RDE) and glutamine 238. Histidine 457 lines the L-aspartate pocket. Residue glutamate 497 coordinates ATP. An L-aspartate-binding site is contributed by arginine 504. 549 to 552 (GLDR) contributes to the ATP binding site.

The protein belongs to the class-II aminoacyl-tRNA synthetase family. Type 1 subfamily. In terms of assembly, homodimer.

The protein resides in the cytoplasm. The catalysed reaction is tRNA(Asx) + L-aspartate + ATP = L-aspartyl-tRNA(Asx) + AMP + diphosphate. In terms of biological role, aspartyl-tRNA synthetase with relaxed tRNA specificity since it is able to aspartylate not only its cognate tRNA(Asp) but also tRNA(Asn). Reaction proceeds in two steps: L-aspartate is first activated by ATP to form Asp-AMP and then transferred to the acceptor end of tRNA(Asp/Asn). In Persephonella marina (strain DSM 14350 / EX-H1), this protein is Aspartate--tRNA(Asp/Asn) ligase.